A 309-amino-acid chain; its full sequence is GalNAc(5)-diNAcBac-PP-undecaprenol beta-1,3-glucosyltransferase (309 aa).

The helical transmembrane segment at 273–291 (SLSIKINAPALILLILSII) threads the bilayer.

The protein belongs to the glycosyltransferase 2 family.

It localises to the membrane. The catalysed reaction is [alpha-D-GalNAc-(1-&gt;4)]4-alpha-D-GalNAc-(1-&gt;3)-alpha-D-diNAcBac-tri-trans,hepta-cis-undecaprenyl diphosphate + UDP-alpha-D-glucose = [alpha-D-GalNAc-(1-&gt;4)]2-[beta-D-Glc-(1-&gt;3)]-[alpha-D-GalNAc-(1-&gt;4)]2-alpha-D-GalNAc-(1-&gt;3)-alpha-D-diNAcBac-tri-trans,hepta-cis-undecaprenyl diphosphate + UDP + H(+). It functions in the pathway protein modification; protein glycosylation. Its function is as follows. Glucosyltransferase that adds he final branching glucose to complete the final heptasaccharide structure in the N-linked protein glycosylation pathway. In Campylobacter jejuni subsp. jejuni serotype O:2 (strain ATCC 700819 / NCTC 11168), this protein is GalNAc(5)-diNAcBac-PP-undecaprenol beta-1,3-glucosyltransferase (pglI).